The sequence spans 367 residues: CST complex subunit STN1 (367 aa).

A DNA-binding region (OB) is located at residues 56–154 (VEILGTVIGR…EIRVTTYYKV (99 aa)). Winged helix-turn-helix (wHTH) stretches follow at residues 190–294 (RAFS…YVTR) and 295–367 (EDKE…YTAF).

Belongs to the STN1 family. In terms of assembly, component of the CST complex, composed of TEN1, CTC1 and STN1. Interacts with TEN1 and CTC1; the interaction is direct. Interacts with ACD/TPP1.

It is found in the nucleus. The protein resides in the chromosome. The protein localises to the telomere. Functionally, component of the CST complex, a complex that binds to single-stranded DNA and is required to protect telomeres from DNA degradation. The CST complex binds single-stranded DNA with high affinity in a sequence-independent manner, while isolated subunits bind DNA with low affinity by themselves. In addition to telomere protection, the CST complex has probably a more general role in DNA metabolism at non-telomeric sites. This chain is CST complex subunit STN1, found in Ailuropoda melanoleuca (Giant panda).